A 205-amino-acid polypeptide reads, in one-letter code: CASP-like protein 0U1 (205 aa).

The Cytoplasmic portion of the chain corresponds to 1–38; it reads MDDAPGASDEAREPLLKRVGASVEGTSLMNHRLMKNPK. A helical membrane pass occupies residues 39–57; the sequence is FRALLVESLMALTTFSFMA. The Extracellular segment spans residues 58–89; sequence KQTEGLAGPELSTLNDCGEAGCGFTKFYQFKG. A helical membrane pass occupies residues 90-110; sequence VVGVYAGFWAYTVILIAMYVI. Residues 111–124 are Cytoplasmic-facing; sequence RKAPPPGTEFASYA. A helical membrane pass occupies residues 125–145; the sequence is LFTAAMATFVVMSITECASVV. At 146 to 159 the chain is on the extracellular side; the sequence is LSSDYYVCKNADYS. A helical membrane pass occupies residues 160–180; sequence LVSLIFAAATIVLNCLTCAFA. The Cytoplasmic portion of the chain corresponds to 181–205; the sequence is WRQWGELKFVGLPKTLSALTETYPG.

It belongs to the Casparian strip membrane proteins (CASP) family. As to quaternary structure, homodimer and heterodimers.

It localises to the cell membrane. The protein is CASP-like protein 0U1 of Ostreococcus lucimarinus (strain CCE9901).